Reading from the N-terminus, the 206-residue chain is Ribosomal RNA large subunit methyltransferase E (206 aa).

Residues G61, W63, D81, D97, and D122 each coordinate S-adenosyl-L-methionine. Residue K162 is the Proton acceptor of the active site.

This sequence belongs to the class I-like SAM-binding methyltransferase superfamily. RNA methyltransferase RlmE family.

Its subcellular location is the cytoplasm. It carries out the reaction uridine(2552) in 23S rRNA + S-adenosyl-L-methionine = 2'-O-methyluridine(2552) in 23S rRNA + S-adenosyl-L-homocysteine + H(+). Specifically methylates the uridine in position 2552 of 23S rRNA at the 2'-O position of the ribose in the fully assembled 50S ribosomal subunit. The sequence is that of Ribosomal RNA large subunit methyltransferase E from Neisseria gonorrhoeae (strain NCCP11945).